Consider the following 512-residue polypeptide: Endo-1,4-beta-xylanase A (512 aa).

Residues 1 to 30 (MKRKVKKMAAMATSIIMAIMIILHSIPVLA) form the signal peptide. The region spanning 33–228 (IIYDNETGTH…SSGYANVYKN (196 aa)) is the GH11 domain. Catalysis depends on Glu-124, which acts as the Nucleophile. Glu-215 functions as the Proton donor in the catalytic mechanism. CBM6 domains follow at residues 251-371 (SIIE…FIFS) and 388-508 (SIIQ…FVFS). Positions 254 and 256 each coordinate Ca(2+). D-xylotriose is bound at residue Thr-271. Residue Arg-276 coordinates Ca(2+). Repeat 1 spans residues 279–340 (GYIENGNTVT…SSTGSWNTYQ (62 aa)). Residues 279–477 (GYIENGNTVT…GSTGSFDTYR (199 aa)) are 2 X 61 AA approximate repeats. D-xylotriose contacts are provided by Tyr-280, Asn-337, and Asn-364. Positions 280, 337, and 364 each coordinate D-xylobiose. Positions 366, 391, 393, and 413 each coordinate Ca(2+). Repeat 2 spans residues 416-477 (GYIENGYSTT…GSTGSFDTYR (62 aa)). Residues Tyr-417, Asp-474, and Asn-501 each contribute to the D-xylotriose site. A Ca(2+)-binding site is contributed by Asp-503.

The protein belongs to the glycosyl hydrolase 11 (cellulase G) family.

The enzyme catalyses Endohydrolysis of (1-&gt;4)-beta-D-xylosidic linkages in xylans.. Its pathway is glycan degradation; xylan degradation. This chain is Endo-1,4-beta-xylanase A (xynA), found in Thermoclostridium stercorarium (Clostridium stercorarium).